The following is a 274-amino-acid chain: ATP synthase subunit delta (274 aa).

The protein belongs to the ATPase delta chain family. In terms of assembly, F-type ATPases have 2 components, F(1) - the catalytic core - and F(0) - the membrane proton channel. F(1) has five subunits: alpha(3), beta(3), gamma(1), delta(1), epsilon(1). F(0) has three main subunits: a(1), b(2) and c(10-14). The alpha and beta chains form an alternating ring which encloses part of the gamma chain. F(1) is attached to F(0) by a central stalk formed by the gamma and epsilon chains, while a peripheral stalk is formed by the delta and b chains.

The protein resides in the cell membrane. Its function is as follows. F(1)F(0) ATP synthase produces ATP from ADP in the presence of a proton or sodium gradient. F-type ATPases consist of two structural domains, F(1) containing the extramembraneous catalytic core and F(0) containing the membrane proton channel, linked together by a central stalk and a peripheral stalk. During catalysis, ATP synthesis in the catalytic domain of F(1) is coupled via a rotary mechanism of the central stalk subunits to proton translocation. Functionally, this protein is part of the stalk that links CF(0) to CF(1). It either transmits conformational changes from CF(0) to CF(1) or is implicated in proton conduction. The polypeptide is ATP synthase subunit delta (Streptomyces coelicolor (strain ATCC BAA-471 / A3(2) / M145)).